The chain runs to 117 residues: cAMP-regulated phosphoprotein 19-B (117 aa).

Residues 1-37 (MSRDNQEIKAPEESSAEEQKEMDDKVTSPEKAEEIKL) show a composition bias toward basic and acidic residues. Positions 1 to 54 (MSRDNQEIKAPEESSAEEQKEMDDKVTSPEKAEEIKLKSRYPNIGPKPGGSDFL) are disordered. S28 carries the phosphoserine; by CDK2 modification. S67 carries the phosphoserine; by GWL modification. The interval 77–117 (MKNKQLPTAAPDKTEVTGDHIPTPQDLPQRKPSLVASKLAG) is disordered. A Phosphothreonine; by CDK2 modification is found at T99. Phosphoserine; by PKA is present on S109.

It belongs to the endosulfine family. As to quaternary structure, interacts (when phosphorylated at Ser-67) with ppp2r2d. Post-translationally, phosphorylation at Ser-67 by gwl during mitosis is essential for interaction with ppp2r2d (PR55-delta) and subsequent inactivation of PP2A.

The protein resides in the cytoplasm. Functionally, protein phosphatase inhibitor that specifically inhibits protein phosphatase 2A (PP2A) during mitosis. When phosphorylated at Ser-67 during mitosis, specifically interacts with ppp2r2d (PR55-delta) and inhibits its activity, leading to inactivation of PP2A, an essential condition to keep cyclin-B1-CDK1 activity high during M phase. The chain is cAMP-regulated phosphoprotein 19-B (arpp19-b) from Xenopus laevis (African clawed frog).